A 123-amino-acid polypeptide reads, in one-letter code: UPF0738 protein BCG9842_B4089 (123 aa).

Belongs to the UPF0738 family.

The chain is UPF0738 protein BCG9842_B4089 from Bacillus cereus (strain G9842).